Consider the following 297-residue polypeptide: ATP synthase subunit gamma, mitochondrial (297 aa).

It belongs to the ATPase gamma chain family. As to quaternary structure, F-type ATPases have 2 components, CF(1) - the catalytic core - and CF(0) - the membrane proton channel. CF(1) has five subunits: alpha(3), beta(3), gamma(1), delta(1), epsilon(1). CF(0) has three main subunits: a, b and c.

It is found in the mitochondrion. The protein localises to the mitochondrion inner membrane. In terms of biological role, mitochondrial membrane ATP synthase (F(1)F(0) ATP synthase or Complex V) produces ATP from ADP in the presence of a proton gradient across the membrane which is generated by electron transport complexes of the respiratory chain. F-type ATPases consist of two structural domains, F(1) - containing the extramembraneous catalytic core, and F(0) - containing the membrane proton channel, linked together by a central stalk and a peripheral stalk. During catalysis, ATP synthesis in the catalytic domain of F(1) is coupled via a rotary mechanism of the central stalk subunits to proton translocation. Part of the complex F(1) domain and the central stalk which is part of the complex rotary element. The gamma subunit protrudes into the catalytic domain formed of alpha(3)beta(3). Rotation of the central stalk against the surrounding alpha(3)beta(3) subunits leads to hydrolysis of ATP in three separate catalytic sites on the beta subunits. The sequence is that of ATP synthase subunit gamma, mitochondrial from Drosophila melanogaster (Fruit fly).